The following is a 270-amino-acid chain: MSYQYGQGYSGPGGNAPQWQQPPRAPYAGGPAAGQYGSPYGSAPPGQQYGGGSPYGSYGQPGPRAPYGGGQAPGGPYGGYGQPQGGPYRQQGSAGNVPPGVNPEAYQWFSTVDSDQSGYINAKELKQALMNFNNSSFNDETCIMMLNMFDKTKSGRVDVFGFSALWTFLQQWRAAFQQFDRDRSGSINTNEMHQALSQMGYNLSPQFIQELVNRYSVRGGTGVLQLDRFIQVCTQLQSMTQAFREKDTGMTGNVRMSYEDFLSSAITRLM.

Residues methionine 1 to valine 97 are disordered. 5 consecutive repeat copies span residues proline 22–glycine 30, proline 44–proline 54, glycine 62–glycine 70, alanine 72–glycine 81, and proline 83–glutamine 91. The segment at proline 22–glutamine 91 is 5 X 9 AA approximate tandem repeat of [AP]-P-G-G-P-Y-G-G-P-P. Composition is skewed to low complexity over residues proline 26–glutamine 47 and tyrosine 55–proline 66. Over residues tyrosine 67 to glutamine 84 the composition is skewed to gly residues. EF-hand domains are found at residues glycine 100 to serine 135, threonine 141 to leucine 169, glutamine 170 to asparagine 202, leucine 203 to methionine 239, and threonine 240 to leucine 269. Ca(2+) is bound by residues aspartate 113, aspartate 115, serine 117, tyrosine 119, and glutamate 124. The Ca(2+) site is built by aspartate 180, aspartate 182, serine 184, serine 186, and glutamate 191.

As to quaternary structure, heterodimer; heterodimerizes (via the EF-hand 5) with pdcd6.

The protein localises to the cytoplasm. The protein resides in the endoplasmic reticulum. It is found in the membrane. Its subcellular location is the cytoplasmic vesicle. It localises to the COPII-coated vesicle membrane. In terms of biological role, calcium-binding protein that acts as an adapter that bridges unrelated proteins or stabilizes weak protein-protein complexes in response to calcium. Acts as a negative regulator of ER-Golgi transport. The chain is Peflin from Danio rerio (Zebrafish).